Here is a 314-residue protein sequence, read N- to C-terminus: Protein OPG185 (314 aa).

A signal peptide spans 1 to 16 (MARLPILLLLISLVYS). An Ig-like V-type domain is found at 17–121 (TPSPQTSKKI…NDTDKVDYEE (105 aa)). Residues 17–278 (TPSPQTSKKI…SNYKTKDFVE (262 aa)) are Virion surface-facing. Cysteine 34 and cysteine 103 are oxidised to a cystine. N-linked (GlcNAc...) asparagine; by host glycosylation is found at asparagine 37, asparagine 38, asparagine 69, asparagine 112, and asparagine 161. The segment at 192 to 217 (NTVSTTSRESTTDETPEPITDKEEDH) is disordered. N-linked (GlcNAc...) asparagine; by host glycosylation is present at asparagine 253. A helical transmembrane segment spans residues 279–302 (IFGITALIILSAVAIFCITYYICN). Topologically, residues 303 to 314 (KRSRKYKTENKV) are intravirion.

This sequence belongs to the orthopoxvirus OPG185 family. In terms of assembly, heterodimerizes with OPG040. The heterodimer OPG185-OPG040 interacts with components of the entry fusion complex OPG143 and OPG094. Heterodimer with C3/VPC protein; disulfide-linked. Glycosylated; contains phosphate and sulfate-substituted glycans. O-glycosylation is required for hemagglutination and hemadsorption activities of infected cell membranes.

Its subcellular location is the virion membrane. The protein resides in the host membrane. In terms of biological role, prevents cell to cell fusion by interacting with and directing the viral OPG040 protein on the host plasma membrane. The OPG185-OPG040 complex associates with components of the entry fusion complex (EFC) presumably to avoid superinfection and syncytium formation. Via its interaction with C3/VCP protein, protects the infected cell and probably also the extracellular enveloped virus from complement attack. The sequence is that of Protein OPG185 (OPG185) from Bos taurus (Bovine).